A 422-amino-acid polypeptide reads, in one-letter code: MKSWSTPAPPTVPSRPDRLRLHDTATGRTRHPGNDGRRASLYVCGITPYDATHLGHASTYVAFDLLHRYWRAAGLEVAYVQNVTDVDDPLLERAEATGVDWRALAEEQTDLFRADMAALEVLAPDHYVGATEAVGLVVDAVETMLAAGRAYRVPGGDGEPEGDVYFDVRSAQSATDWRLGQVSAMDLDEMAAVFPERGGDPDRPGKRDPLDPLLWRVHREGEPAWDGRSLGSGRPGWHIECSVISRAHLPAPFTVQGGGSDLRFPHHEFSAAHATAVDGLPLAHTYAHTGMVALDGEKMSKSLGNLELVSRLRARGVEPVAVRAAILAHHYRSDWEWSEQVLTDAQARVTRWRAALDGPHAAAGVAVLDAVHAALSDDLDAPRALEALDAWAAGTLPGLVETAADPVPVVDVVAALLGLRLR.

The segment at 1-34 (MKSWSTPAPPTVPSRPDRLRLHDTATGRTRHPGN) is disordered. Residues 15-25 (RPDRLRLHDTA) show a composition bias toward basic and acidic residues. Cys-44 is a binding site for Zn(2+). L-cysteinyl-5'-AMP-binding positions include 44–47 (CGIT), Thr-59, and 82–84 (NVT). Residues 46 to 56 (ITPYDATHLGH) carry the 'HIGH' region motif. The 'ERGGDP' region motif lies at 196 to 201 (ERGGDP). Trp-237 serves as a coordination point for L-cysteinyl-5'-AMP. Cys-241 is a Zn(2+) binding site. 259–261 (GSD) serves as a coordination point for L-cysteinyl-5'-AMP. His-266 provides a ligand contact to Zn(2+). L-cysteinyl-5'-AMP is bound at residue Val-292. A 'KMSKS' region motif is present at residues 298–302 (KMSKS).

Belongs to the class-I aminoacyl-tRNA synthetase family. MshC subfamily. As to quaternary structure, monomer. Requires Zn(2+) as cofactor.

It carries out the reaction 1D-myo-inositol 2-amino-2-deoxy-alpha-D-glucopyranoside + L-cysteine + ATP = 1D-myo-inositol 2-(L-cysteinylamino)-2-deoxy-alpha-D-glucopyranoside + AMP + diphosphate + H(+). Its function is as follows. Catalyzes the ATP-dependent condensation of GlcN-Ins and L-cysteine to form L-Cys-GlcN-Ins. This Micrococcus luteus (strain ATCC 4698 / DSM 20030 / JCM 1464 / CCM 169 / CCUG 5858 / IAM 1056 / NBRC 3333 / NCIMB 9278 / NCTC 2665 / VKM Ac-2230) (Micrococcus lysodeikticus) protein is L-cysteine:1D-myo-inositol 2-amino-2-deoxy-alpha-D-glucopyranoside ligase.